Consider the following 738-residue polypeptide: AP-4 complex subunit beta-1 (738 aa).

Positions 534–600 are hinge; sequence CSPKSDPSLG…NASFATSGHL (67 aa). Residues 601-738 form an ear; mediates interaction with TEPSIN region; that stretch reads ISEENKEGAQ…VIGTVGDIKS (138 aa).

It belongs to the adaptor complexes large subunit family. In terms of assembly, adaptor protein complex 4 (AP-4) is a heterotetramer composed of two large adaptins (epsilon-type subunit AP4E1 and beta-type subunit AP4B1), a medium adaptin (mu-type subunit AP4M1) and a small adaptin (sigma-type AP4S1). Interacts with TEPSIN; this interaction requires the presence of a functional AP-4 complex. Interacts with GRIA2; probably indirect it mediates the somatodendritic localization of GRIA2 in neurons.

It localises to the golgi apparatus. Its subcellular location is the trans-Golgi network membrane. In terms of biological role, component of the adaptor protein complex 4 (AP-4). Adaptor protein complexes are vesicle coat components involved both in vesicle formation and cargo selection. They control the vesicular transport of proteins in different trafficking pathways. AP-4 forms a non clathrin-associated coat on vesicles departing the trans-Golgi network (TGN) and may be involved in the targeting of proteins from the trans-Golgi network (TGN) to the endosomal-lysosomal system. It is also involved in protein sorting to the basolateral membrane in epithelial cells and the proper asymmetric localization of somatodendritic proteins in neurons. AP-4 is involved in the recognition and binding of tyrosine-based sorting signals found in the cytoplasmic part of cargos, but may also recognize other types of sorting signal. The sequence is that of AP-4 complex subunit beta-1 from Mus musculus (Mouse).